A 315-amino-acid polypeptide reads, in one-letter code: Ester hydrolase C11orf54 homolog (315 aa).

Residues histidine 266, histidine 268, and histidine 278 each coordinate Zn(2+).

In terms of assembly, monomer. Requires Zn(2+) as cofactor.

It localises to the nucleus. It is found in the cytoplasm. Its function is as follows. Exhibits ester hydrolase activity on the substrate p-nitrophenyl acetate, in vitro. Regulates DNA damage and repair by regulating HIF1A degradation via chaperone-mediated autophagy (CMA). This chain is Ester hydrolase C11orf54 homolog, found in Rattus norvegicus (Rat).